Here is a 364-residue protein sequence, read N- to C-terminus: Endopolygalacturonase B (364 aa).

A signal peptide spans 1-20 (MHFLQNSLIAAAMGAALVAA). A propeptide spanning residues 21-29 (APAADLDAR) is cleaved from the precursor. Residues C32 and C47 are joined by a disulfide bond. An N-linked (GlcNAc...) asparagine glycan is attached at N138. 6 PbH1 repeats span residues 159 to 188 (SDHL…DIGS), 189 to 210 (STYI…AINS), 211 to 231 (GEHI…SIGS), 240 to 261 (VKSV…RIKT), 269 to 291 (VTDV…IVEQ), and 303 to 348 (TNGV…DITG). Catalysis depends on D203, which acts as the Proton donor. C205 and C221 are oxidised to a cystine. Residue H225 is part of the active site. Disulfide bonds link C331–C336 and C355–C364.

This sequence belongs to the glycosyl hydrolase 28 family.

The protein resides in the secreted. The enzyme catalyses (1,4-alpha-D-galacturonosyl)n+m + H2O = (1,4-alpha-D-galacturonosyl)n + (1,4-alpha-D-galacturonosyl)m.. Functionally, involved in maceration and soft-rotting of plant tissue. Hydrolyzes the 1,4-alpha glycosidic bonds of de-esterified pectate in the smooth region of the plant cell wall. This chain is Endopolygalacturonase B (pgaB), found in Emericella nidulans (strain FGSC A4 / ATCC 38163 / CBS 112.46 / NRRL 194 / M139) (Aspergillus nidulans).